The following is a 166-amino-acid chain: Interferon gamma (166 aa).

The N-terminal stretch at 1-23 is a signal peptide; it reads MKYTSYILAFQLCVVLGSLGCYC. The residue at position 24 (Gln-24) is a Pyrrolidone carboxylic acid. 3 N-linked (GlcNAc...) asparagine glycosylation sites follow: Asn-48, Asn-86, and Asn-120.

Belongs to the type II (or gamma) interferon family. As to quaternary structure, homodimer. Interacts with IFNGR1 (via extracellular domain); this interaction promotes IFNGR1 dimerization. In terms of tissue distribution, released primarily from activated T lymphocytes.

The protein localises to the secreted. Type II interferon produced by immune cells such as T-cells and NK cells that plays crucial roles in antimicrobial, antiviral, and antitumor responses by activating effector immune cells and enhancing antigen presentation. Primarily signals through the JAK-STAT pathway after interaction with its receptor IFNGR1 to affect gene regulation. Upon IFNG binding, IFNGR1 intracellular domain opens out to allow association of downstream signaling components JAK2, JAK1 and STAT1, leading to STAT1 activation, nuclear translocation and transcription of IFNG-regulated genes. Many of the induced genes are transcription factors such as IRF1 that are able to further drive regulation of a next wave of transcription. Plays a role in class I antigen presentation pathway by inducing a replacement of catalytic proteasome subunits with immunoproteasome subunits. In turn, increases the quantity, quality, and repertoire of peptides for class I MHC loading. Increases the efficiency of peptide generation also by inducing the expression of activator PA28 that associates with the proteasome and alters its proteolytic cleavage preference. Up-regulates as well MHC II complexes on the cell surface by promoting expression of several key molecules such as cathepsins B/CTSB, H/CTSH, and L/CTSL. Participates in the regulation of hematopoietic stem cells during development and under homeostatic conditions by affecting their development, quiescence, and differentiation. This chain is Interferon gamma (IFNG), found in Callithrix jacchus (White-tufted-ear marmoset).